Here is a 116-residue protein sequence, read N- to C-terminus: Large ribosomal subunit protein bL20c (116 aa).

This sequence belongs to the bacterial ribosomal protein bL20 family.

It is found in the plastid. It localises to the chloroplast. Binds directly to 23S ribosomal RNA and is necessary for the in vitro assembly process of the 50S ribosomal subunit. It is not involved in the protein synthesizing functions of that subunit. The chain is Large ribosomal subunit protein bL20c from Cryptomeria japonica (Japanese cedar).